Here is a 221-residue protein sequence, read N- to C-terminus: Transcription factor otaR1 (221 aa).

The tract at residues 109-146 is disordered; sequence ASRSRPAFSTPASRPGLSSAKSPSLGATSPGSMDRSEE. Residues 127-139 are compositionally biased toward polar residues; that stretch reads SAKSPSLGATSPG. A basic motif region spans residues 152–192; the sequence is KKYHEKYKERNRLAAGRSRQKQADLINLLQAEQQEEERRRK. The region spanning 152–215 is the bZIP domain; the sequence is KKYHEKYKER…VDMKQELQHH (64 aa). The tract at residues 198 to 212 is leucine-zipper; sequence IANMQKELVDMKQEL.

It is found in the nucleus. Its function is as follows. Transcription factor; part of the gene cluster that mediates the biosynthesis of ochratoxin A (OTA), a mycotoxin demonstrated to have nephrotoxic, immunotoxic, genotoxic, neurotoxic, and teratogenic properties. Positively regulates the expression of the OTA biosynthetic genes and subsequent production of OTA. Probably binds to conserved 5'-ACGT-3' bZIP binding motifs found in multiple copies (3 to 4) in the promoters of the OTA biosynthetic genes. Acts not only as a pathway-specific regulator of the OTA cluster but also binds at other chromosomal positions outside the OTA cluster and can act as a broad regulator. Negatively regulates pathogenicity and plays a critical role in tolerance to reactive oxygen species (ROS). This Aspergillus niger (strain ATCC MYA-4892 / CBS 513.88 / FGSC A1513) protein is Transcription factor otaR1.